The chain runs to 182 residues: Ribosome maturation factor RimM (182 aa).

Residues G102–F182 form the PRC barrel domain.

This sequence belongs to the RimM family. Binds ribosomal protein uS19.

It localises to the cytoplasm. In terms of biological role, an accessory protein needed during the final step in the assembly of 30S ribosomal subunit, possibly for assembly of the head region. Essential for efficient processing of 16S rRNA. May be needed both before and after RbfA during the maturation of 16S rRNA. It has affinity for free ribosomal 30S subunits but not for 70S ribosomes. The chain is Ribosome maturation factor RimM from Pectobacterium carotovorum subsp. carotovorum (strain PC1).